Here is a 65-residue protein sequence, read N- to C-terminus: Sodium channel alpha-toxin Acra4 (65 aa).

The region spanning 2 to 63 is the LCN-type CS-alpha/beta domain; that stretch reads RDGYIVDDKN…PIKDPSYKCH (62 aa). 4 cysteine pairs are disulfide-bonded: Cys12/Cys62, Cys16/Cys34, Cys20/Cys44, and Cys24/Cys46. Residue Arg65 is a propeptide, removed by a carboxypeptidase.

It belongs to the long (4 C-C) scorpion toxin superfamily. Sodium channel inhibitor family. Alpha subfamily. Expressed by the venom gland.

The protein localises to the secreted. Functionally, alpha toxins bind voltage-independently at site-3 of sodium channels (Nav) and inhibit the inactivation of the activated channels, thereby blocking neuronal transmission. Electrophysiological studies of this were performed using sodium-channels expressed in F11 cell culture, by patch-clamp recordings. Affinity of this toxin toward sodium channels in F11 cell line is in the order of 1 uM concentration. The chain is Sodium channel alpha-toxin Acra4 from Androctonus crassicauda (Arabian fat-tailed scorpion).